The primary structure comprises 425 residues: Multifunctional CCA protein (425 aa).

The ATP site is built by G8 and R11. 2 residues coordinate CTP: G8 and R11. The Mg(2+) site is built by D21 and D23. ATP is bound by residues R91, R141, and R144. Residues R91, R141, and R144 each contribute to the CTP site. Residues 230–331 (TGVHLMMVLD…VRLLERCDAI (102 aa)) enclose the HD domain.

Belongs to the tRNA nucleotidyltransferase/poly(A) polymerase family. Bacterial CCA-adding enzyme type 1 subfamily. Monomer. Can also form homodimers and oligomers. Mg(2+) is required as a cofactor. Requires Ni(2+) as cofactor.

The enzyme catalyses a tRNA precursor + 2 CTP + ATP = a tRNA with a 3' CCA end + 3 diphosphate. It catalyses the reaction a tRNA with a 3' CCA end + 2 CTP + ATP = a tRNA with a 3' CCACCA end + 3 diphosphate. Its function is as follows. Catalyzes the addition and repair of the essential 3'-terminal CCA sequence in tRNAs without using a nucleic acid template. Adds these three nucleotides in the order of C, C, and A to the tRNA nucleotide-73, using CTP and ATP as substrates and producing inorganic pyrophosphate. tRNA 3'-terminal CCA addition is required both for tRNA processing and repair. Also involved in tRNA surveillance by mediating tandem CCA addition to generate a CCACCA at the 3' terminus of unstable tRNAs. While stable tRNAs receive only 3'-terminal CCA, unstable tRNAs are marked with CCACCA and rapidly degraded. This chain is Multifunctional CCA protein, found in Acidovorax ebreus (strain TPSY) (Diaphorobacter sp. (strain TPSY)).